The sequence spans 267 residues: Elsinochrome reductase 1 (267 aa).

Residues I26, D72, N99, and R132 each contribute to the NADP(+) site. The active-site Proton donor is the S149. NADP(+) contacts are provided by Y163, K167, I196, and T198. Y163 acts as the Proton acceptor in catalysis. K167 serves as the catalytic Lowers pKa of active site Tyr.

The protein belongs to the short-chain dehydrogenases/reductases (SDR) family.

Reductase; part of the gene cluster that mediates the biosynthesis of elsinochromes, pigments consisting of at least four interconvertible tautomers (A, B, C and D) that have a core phenolic quinone to which various side chains are attached and which play an important role in fungal pathogenesis. The non-reducing polyketide synthase PKS1 was proposed to iteratively catalyze decarboxylation between acetyl-CoA and malonyl-CoA subunits for polyketide chain elongation. The released polyketide undergoes cyclization to form an aromatic ring, and proceeds via serial modification steps to produce the heptaketide back- bone of elsinochrome. As elsinochrome has a symmetrical structure, two identical heptaketides are fused to form a core 1,2-dihydrobenzo-perylene ring structure, which can then be successively modified to produce the various derivatives of elsinochrome. Some of these reactions may be cooperatively carried out, at least in part, by the products of RDT1, OXR1 and PKS1. PRF1, embedded within the elsinochrome cluster possibly functions to stabilize some of the biosynthetic enzymes required for elsinochrome production. As prefoldin is a hexamer containing 2 a and 4 b subunits, additional prefoldin subunits, whose coding genes may not immediately link to the elsinochrome biosynthetic gene cluster, are required to fulfill the chaperone function. In addition, no methyltransferase-coding gene exists within the biosynthetic gene cluster, even though elsinochrome has four methyl groups at positions C3, C7, C8 and C12. Apparently, the identified gene cluster does not contain the entire entourage of genes responsible for elsinochrome biosynthesis. Once elsinochrome is synthesized, it must be exported outside the fungal cells, which is probably accomplished by the ECT1 transporter, to avoid toxicity. The sequence is that of Elsinochrome reductase 1 from Elsinoe fawcettii (Citrus scab fungus).